The following is a 60-amino-acid chain: Large ribosomal subunit protein uL30 (60 aa).

This sequence belongs to the universal ribosomal protein uL30 family. In terms of assembly, part of the 50S ribosomal subunit.

The polypeptide is Large ribosomal subunit protein uL30 (Christiangramia forsetii (strain DSM 17595 / CGMCC 1.15422 / KT0803) (Gramella forsetii)).